A 418-amino-acid chain; its full sequence is Putative competence-damage inducible protein (418 aa).

The protein belongs to the CinA family.

The polypeptide is Putative competence-damage inducible protein (Streptococcus pneumoniae (strain 70585)).